The chain runs to 340 residues: Dihydroorotate dehydrogenase (quinone) (340 aa).

Residues 62 to 66 (AGLDK) and T86 each bind FMN. Residue K66 coordinates substrate. 111–115 (NRMGF) is a binding site for substrate. N139 and N172 together coordinate FMN. N172 contributes to the substrate binding site. The Nucleophile role is filled by S175. Position 177 (N177) interacts with substrate. FMN contacts are provided by K217 and T245. Residue 246–247 (NT) coordinates substrate. FMN contacts are provided by residues G268, G297, and 318–319 (YS).

This sequence belongs to the dihydroorotate dehydrogenase family. Type 2 subfamily. In terms of assembly, monomer. It depends on FMN as a cofactor.

Its subcellular location is the cell membrane. It catalyses the reaction (S)-dihydroorotate + a quinone = orotate + a quinol. Its pathway is pyrimidine metabolism; UMP biosynthesis via de novo pathway; orotate from (S)-dihydroorotate (quinone route): step 1/1. Catalyzes the conversion of dihydroorotate to orotate with quinone as electron acceptor. The protein is Dihydroorotate dehydrogenase (quinone) of Alkalilimnicola ehrlichii (strain ATCC BAA-1101 / DSM 17681 / MLHE-1).